Here is a 382-residue protein sequence, read N- to C-terminus: Mannitol-1-phosphate 5-dehydrogenase (382 aa).

Alanine 3–glycine 14 contributes to the NAD(+) binding site.

Belongs to the mannitol dehydrogenase family.

It carries out the reaction D-mannitol 1-phosphate + NAD(+) = beta-D-fructose 6-phosphate + NADH + H(+). The sequence is that of Mannitol-1-phosphate 5-dehydrogenase from Psychromonas ingrahamii (strain DSM 17664 / CCUG 51855 / 37).